The chain runs to 112 residues: Nucleoid-associated protein BCI_0116 (112 aa).

This sequence belongs to the YbaB/EbfC family. In terms of assembly, homodimer.

The protein resides in the cytoplasm. Its subcellular location is the nucleoid. Functionally, binds to DNA and alters its conformation. May be involved in regulation of gene expression, nucleoid organization and DNA protection. The polypeptide is Nucleoid-associated protein BCI_0116 (Baumannia cicadellinicola subsp. Homalodisca coagulata).